The primary structure comprises 422 residues: 26S proteasome non-ATPase regulatory subunit 11 (422 aa).

A PCI domain is found at D224 to P392.

The protein belongs to the proteasome subunit S9 family. Component of the 19S proteasome regulatory particle complex. The 26S proteasome consists of a 20S core particle (CP) and two 19S regulatory subunits (RP). The regulatory particle is made of a lid composed of 9 subunits including PSMD11, a base containing 6 ATPases and few additional components.

It localises to the nucleus. The protein localises to the cytoplasm. Its subcellular location is the cytosol. Component of the 26S proteasome, a multiprotein complex involved in the ATP-dependent degradation of ubiquitinated proteins. This complex plays a key role in the maintenance of protein homeostasis by removing misfolded or damaged proteins, which could impair cellular functions, and by removing proteins whose functions are no longer required. Therefore, the proteasome participates in numerous cellular processes, including cell cycle progression, apoptosis, or DNA damage repair. In the complex, PSMD11 is required for proteasome assembly. Plays a key role in increased proteasome activity in embryonic stem cells (ESCs): its high expression in ESCs promotes enhanced assembly of the 26S proteasome, followed by higher proteasome activity. This Xenopus tropicalis (Western clawed frog) protein is 26S proteasome non-ATPase regulatory subunit 11 (psmd11).